We begin with the raw amino-acid sequence, 311 residues long: Vomeronasal type-1 receptor 3 (311 aa).

The Extracellular segment spans residues 1–5; the sequence is MASKD. A helical transmembrane segment spans residues 6-26; sequence FAIGMILLSQIMVGFLGNFFL. The Cytoplasmic segment spans residues 27 to 51; it reads LYHYSFLCFTRGMLQSTDLILKHLT. The helical transmembrane segment at 52–72 threads the bilayer; the sequence is IANSLVILSKGIPQTMAAFGL. Residues 73 to 92 lie on the Extracellular side of the membrane; that stretch reads KDSLSDIGCKFVFYVHRVGR. Residues 93–113 traverse the membrane as a helical segment; sequence AVCVGNACLLSVFQVITISPS. At 114 to 130 the chain is on the cytoplasmic side; it reads EFRWAELKLHAHKYIRS. A helical membrane pass occupies residues 131 to 151; that stretch reads FILVLCWILNTLVNITVLLHV. At 152-187 the chain is on the extracellular side; sequence TGKWNSINSTKTNDYGYCSGGSRSRIPHSLHIVLLS. Residue N159 is glycosylated (N-linked (GlcNAc...) asparagine). The chain crosses the membrane as a helical span at residues 188–208; sequence SLDVLCLGLMTLASGSMVFIL. Over 209–232 the chain is Cytoplasmic; sequence HRHKQQVQHIHGTNLSARSSPESR. The chain crosses the membrane as a helical span at residues 233–249; that stretch reads VTQSILVLVSTLCYFTR. Residues 250-264 are Extracellular-facing; it reads SPPSLHMSLFPNPSW. A helical membrane pass occupies residues 265–285; it reads WLLNTSALITACFPMVSPFVL. Over 286–311 the chain is Cytoplasmic; the sequence is MSRHPRIPRLGSACCGRNPQFPKLVR.

It belongs to the G-protein coupled receptor 1 family.

It localises to the cell membrane. Putative pheromone receptor. This Homo sapiens (Human) protein is Vomeronasal type-1 receptor 3 (VN1R3).